The sequence spans 474 residues: Phosphatidylserine synthase 2 (474 aa).

The Lumenal segment spans residues 1–62; sequence MLRSDVRRVA…DDGTNTFFWR (62 aa). A helical transmembrane segment spans residues 63 to 83; that stretch reads AHTLTVLFILTCSLGYVTLLE. Residues 84–96 are Cytoplasmic-facing; that stretch reads ETPQDTAYNAKRG. The helical transmembrane segment at 97-117 threads the bilayer; the sequence is IIASILVFLCFGVTQAKDGPF. Residues 118-126 are Lumenal-facing; it reads SRPHPAYWR. The helical transmembrane segment at 127–147 threads the bilayer; the sequence is FWLCVSVVYELFLIFILFQTV. The Cytoplasmic segment spans residues 148 to 313; the sequence is HDGRQFMKFI…EWKPASSLRR (166 aa). A helical membrane pass occupies residues 314-334; that stretch reads WLAVCGIIFVFLLAELNTFYL. A topological domain (lumenal) is located at residue lysine 335. The helical transmembrane segment at 336 to 356 threads the bilayer; it reads FVLWMPPEHYLVLLRLVFFVN. Residues 357 to 376 are Cytoplasmic-facing; that stretch reads VGGVAMREIYDFMDDLKFHK. Residues 377–397 traverse the membrane as a helical segment; it reads KLGQQAWMVAAITVTEFLIVV. Residues 398–403 lie on the Lumenal side of the membrane; that stretch reads KYDPYT. The helical transmembrane segment at 404-424 threads the bilayer; the sequence is ITLPLPFYVTQCWILGIVLVL. At 425 to 474 the chain is on the cytoplasmic side; it reads TWTVWRFFIRDITLRYKEIRQQKQHRNEEEKSHRNGDVNSEKDTNKHKKH. Residues 448-468 are compositionally biased toward basic and acidic residues; that stretch reads QHRNEEEKSHRNGDVNSEKDT. Positions 448–474 are disordered; it reads QHRNEEEKSHRNGDVNSEKDTNKHKKH.

It belongs to the phosphatidyl serine synthase family.

It localises to the endoplasmic reticulum membrane. The enzyme catalyses a 1,2-diacyl-sn-glycero-3-phosphoethanolamine + L-serine = a 1,2-diacyl-sn-glycero-3-phospho-L-serine + ethanolamine. It carries out the reaction 1-hexadecanoyl-2-(9Z-octadecenoyl)-sn-glycero-3-phosphoethanolamine + L-serine = 1-hexadecanoyl-2-(9Z-octadecenoyl)-sn-glycero-3-phospho-L-serine + ethanolamine. The catalysed reaction is 1-hexadecanoyl-2-(4Z,7Z,10Z,13Z,16Z,19Z-docosahexaenoyl)-sn-glycero-3-phosphoethanolamine + L-serine = 1-hexadecanoyl-2-(4Z,7Z,10Z,13Z,16Z,19Z-docosahexaenoyl)-sn-glycero-3-phosphoserine + ethanolamine. It catalyses the reaction 1-octadecanoyl-2-(5Z,8Z,11Z,14Z)-eicosatetraenoyl-sn-glycero-3-phosphoethanolamine + L-serine = 1-octadecanoyl-2-(5Z,8Z,11Z,14Z)-eicosatetraenoyl-sn-glycero-3-phosphoserine + ethanolamine. The enzyme catalyses 1-octadecanoyl-2-(4Z,7Z,10Z,13Z,16Z,19Z-docosahexaenoyl)-sn-glycero-3-phosphoethanolamine + L-serine = 1-octadecanoyl-2-(4Z,7Z,10Z,13Z,16Z,19Z-docosahexaenoyl)-sn-glycero-3-phosphoserine + ethanolamine. It carries out the reaction 1-(1Z-octadecenyl)-2-(4Z,7Z,10Z,13Z,16Z,19Z-docosahexaenoyl)-sn-glycero-3-phosphoethanolamine + L-serine = 1-(1Z-octadecenyl)-2-(4Z,7Z,10Z,13Z,16Z,19Z-docosahexaenoyl)-sn-glycero-3-phospho-L-serine + ethanolamine. The catalysed reaction is 1-octadecanoyl-2-(9Z-octadecenoyl)-sn-glycero-3-phosphoethanolamine + L-serine = 1-octadecanoyl-2-(9Z-octadecenoyl)-sn-glycero-3-phospho-L-serine + ethanolamine. It catalyses the reaction 1-(1Z-octadecenyl)-2-(9Z-octadecenoyl)-sn-glycero-3-phosphoethanolamine + L-serine = 1-(1Z-octadecenyl)-2-(9Z-octadecenoyl)-sn-glycero-3-phospho-L-serine + ethanolamine. The enzyme catalyses 1-(1Z-octadecenyl)-2-(5Z,8Z,11Z,14Z- eicosatetraenoyl)-sn-glycero-3-phosphoethanolamine + L-serine = 1-(1Z-octadecenyl)-2-(5Z,8Z,11Z,14Z-eicosatetraenoyl)-sn-glycero-3-phospho-L-serine + ethanolamine. It participates in phospholipid metabolism; phosphatidylserine biosynthesis. Its function is as follows. Catalyzes a base-exchange reaction in which the polar head group of phosphatidylethanolamine (PE) or phosphatidylcholine (PC) is replaced by L-serine. Catalyzes the conversion of phosphatatidylethanolamine and does not act on phosphatidylcholine. Can utilize both phosphatidylethanolamine (PE) plasmalogen and diacyl PE as substrate and the latter is six times better utilized, indicating the importance of an ester linkage at the sn-1 position. Although it shows no sn-1 fatty acyl preference, exhibits significant preference towards docosahexaenoic acid (22:6n-3) compared with 18:1 or 20:4 at the sn-2 position. In Xenopus tropicalis (Western clawed frog), this protein is Phosphatidylserine synthase 2 (ptdss2).